The following is a 119-amino-acid chain: Ribosome-binding factor A (119 aa).

It belongs to the RbfA family. In terms of assembly, monomer. Binds 30S ribosomal subunits, but not 50S ribosomal subunits or 70S ribosomes.

Its subcellular location is the cytoplasm. Functionally, one of several proteins that assist in the late maturation steps of the functional core of the 30S ribosomal subunit. Associates with free 30S ribosomal subunits (but not with 30S subunits that are part of 70S ribosomes or polysomes). Required for efficient processing of 16S rRNA. May interact with the 5'-terminal helix region of 16S rRNA. The protein is Ribosome-binding factor A of Coxiella burnetii (strain CbuK_Q154) (Coxiella burnetii (strain Q154)).